The sequence spans 377 residues: Adaptive-response sensory kinase SasA (377 aa).

In terms of domain architecture, Histidine kinase spans 154–373 (MLVHDLRSPL…SFHFTLPVYR (220 aa)). A Phosphohistidine; by autocatalysis modification is found at histidine 157.

In terms of assembly, homooligomerizes. Interacts with KaiC. Participates in the KaiABC clock complex, whose core is composed of a KaiC homohexamer, 6 KaiB and up to 6 KaiA dimers. SasA and KaiB(fs) compete to bind to KaiC.

It catalyses the reaction ATP + protein L-histidine = ADP + protein N-phospho-L-histidine.. Functionally, member of the two-component regulatory system SasA/RpaA involved in genome-wide circadian gene expression. One of several clock output pathways. Participates in the Kai clock protein complex, the main circadian regulator in cyanobacteria, via its interaction with KaiC. KaiC enhances the autophosphorylation activity of SasA, which then transfers its phosphate group to RpaA to activate it. In addition to its output function, recruits fold-shifted KaiB (KaiB(fs)) to KaiC to cooperatively form the KaiB(6):KaiC(6) complex (independent of SasA kinase activity). Required for robustness of the circadian rhythm of gene expression and is involved in clock output, also required for adaptation to light/dark cycles. The sequence is that of Adaptive-response sensory kinase SasA from Synechococcus sp. (strain JA-3-3Ab) (Cyanobacteria bacterium Yellowstone A-Prime).